Here is a 31-residue protein sequence, read N- to C-terminus: Cyclotide mech-5 (31 aa).

A cross-link (cyclopeptide (Gly-Asp)) is located at residues 1–31 (GVIPCGESCVFIPCISSVVGCTCKNKVCYRD). 3 disulfide bridges follow: cysteine 5-cysteine 21, cysteine 9-cysteine 23, and cysteine 14-cysteine 28.

This is a cyclic peptide. In terms of processing, contains 3 disulfide bonds.

In terms of biological role, probably participates in a plant defense mechanism (Potential). Binds to and induces leakage in phospholipd membranes, particularly ones containing 1-palmitoyl-2-oleophosphatidylethanolamine (POPE). This Melicytus chathamicus (Chatham Island mahoe) protein is Cyclotide mech-5.